Here is a 408-residue protein sequence, read N- to C-terminus: Acetylornithine aminotransferase (408 aa).

Residues 107 to 108 (GT) and Phe141 each bind pyridoxal 5'-phosphate. A N(2)-acetyl-L-ornithine-binding site is contributed by Arg144. Residue 227-230 (DEIQ) coordinates pyridoxal 5'-phosphate. Lys256 carries the N6-(pyridoxal phosphate)lysine modification. Thr284 is a N(2)-acetyl-L-ornithine binding site. Thr285 serves as a coordination point for pyridoxal 5'-phosphate.

It belongs to the class-III pyridoxal-phosphate-dependent aminotransferase family. ArgD subfamily. In terms of assembly, homodimer. The cofactor is pyridoxal 5'-phosphate.

It localises to the cytoplasm. The enzyme catalyses N(2)-acetyl-L-ornithine + 2-oxoglutarate = N-acetyl-L-glutamate 5-semialdehyde + L-glutamate. It functions in the pathway amino-acid biosynthesis; L-arginine biosynthesis; N(2)-acetyl-L-ornithine from L-glutamate: step 4/4. The sequence is that of Acetylornithine aminotransferase from Xanthomonas campestris pv. campestris (strain ATCC 33913 / DSM 3586 / NCPPB 528 / LMG 568 / P 25).